A 220-amino-acid polypeptide reads, in one-letter code: uncharacterized protein (220 aa).

This is an uncharacterized protein from Acidianus two-tailed virus (ATV).